The chain runs to 470 residues: Sorting nexin-17 (470 aa).

The 109-residue stretch at 1–109 (MHFSIPETES…SFLRRAQQET (109 aa)) folds into the PX domain. The a 1,2-diacyl-sn-glycero-3-phospho-(1D-myo-inositol-3-phosphate) site is built by R36, S38, K62, and R75. In terms of domain architecture, Ras-associating spans 115–206 (EEVSLEVLLS…YKIVLRKSYW (92 aa)). An FERM-like region spans residues 115–432 (EEVSLEVLLS…DASRESMVKL (318 aa)). The tract at residues 270–432 (GYLRFDACVA…DASRESMVKL (163 aa)) is PTB-like F3 module. A phosphoserine mark is found at S336, S407, S409, S415, S421, S437, and S440. Residues 401–426 (GGTLRRSDSQQAVKSPPLLESPDASR) are disordered.

The protein belongs to the sorting nexin family. In terms of assembly, monomer. Interacts with APP (via cytoplasmic YXNPXY motif). Interacts with KIF1B. Interacts with the C-termini of P-selectin, PTC, LDLR, VLDLR, LRP1 and LRP8. Interacts with KRIT1 (via N-terminus). Interacts with HRAS. Interacts with ITGB1 and ITGB5 (via NPxY motif). Interacts with CCDC22 and CCDC93; the interaction associates SNX17 with the CCC complex. Interacts (via C-terminus) with VPS26C and VPS35L; the interactions are direct and associate SNX17 with the retriever complex. Detected in brain neurons (at protein level). Broadly expressed, with highest levels in brain and placenta, and lowest levels in colon, intestine and liver.

It is found in the cytoplasm. It localises to the early endosome. The protein localises to the cytoplasmic vesicle membrane. Functionally, critical regulator of endosomal recycling of numerous surface proteins, including integrins, signaling receptor and channels. Binds to NPxY sequences in the cytoplasmic tails of target cargos. Associates with retriever and CCC complexes to prevent lysosomal degradation and promote cell surface recycling of numerous cargos such as integrins ITGB1, ITGB5 and their associated alpha subunits. Also required for maintenance of normal cell surface levels of APP and LRP1. Interacts with membranes containing phosphatidylinositol 3-phosphate (PtdIns(3P)). This Mus musculus (Mouse) protein is Sorting nexin-17 (Snx17).